Consider the following 149-residue polypeptide: NPC intracellular cholesterol transporter 2 (149 aa).

Residues 1–19 (MRFLTVAFLFLALSASALA) form the signal peptide. Cystine bridges form between Cys-27–Cys-140, Cys-42–Cys-47, and Cys-93–Cys-99. The N-linked (GlcNAc...) asparagine glycan is linked to Asn-58. Lys-116 is modified (N6-acetyllysine).

It belongs to the NPC2 family. As to quaternary structure, interacts with NPC1 (via the second lumenal domain) in a cholestrol-dependent manner. Interacts with NUS1/NgBR, the interaction stabilizes NCP2 and regulates cholesterol trafficking. Interacts with DHDDS. Interacts with NEDD4L (via C2 domain). Interacts with NPC1L1. Expressed in kidney, spleen, liver and mammary gland, but not in testis.

It is found in the secreted. The protein localises to the endoplasmic reticulum. The protein resides in the lysosome. The enzyme catalyses cholesterol(in) = cholesterol(out). Intracellular cholesterol transporter which acts in concert with NPC1 and plays an important role in the egress of cholesterol from the lysosomal compartment. Unesterified cholesterol that has been released from LDLs in the lumen of the late endosomes/lysosomes is transferred by NPC2 to the cholesterol-binding pocket in the N-terminal domain of NPC1. May bind and mobilize cholesterol that is associated with membranes. NPC2 binds cholesterol with a 1:1 stoichiometry. Can bind a variety of sterols, including lathosterol, desmosterol and the plant sterols stigmasterol and beta-sitosterol. The secreted form of NCP2 regulates biliary cholesterol secretion via stimulation of ABCG5/ABCG8-mediated cholesterol transport. This is NPC intracellular cholesterol transporter 2 from Bos taurus (Bovine).